The primary structure comprises 426 residues: MESLTLQPINKIQGEVNLPGSKSVSNRALLLAALAKGTTRLTNLLDSDDIRHMLNALTKLGVQYQLSEDKTECVVEGLGRPFSVSEPVELFLGNAGTAMRPLAAALCLGEGEYVLTGEPRMKERPIGHLVKALKAAGADVTYLENENYPPLKIVGTGLKPGSVSIDGSISSQFLTAFLMSAPLAEGDIRINIEGELVSKPYIDITLHIMKQFGVDVINNDYQEFVIPVGQQYVAPGDFLVEGDASSASYFLAAAAIKGGEVKVTGIGKNSIQGDIQFADALEKMGADIEWGDDYVISRVGQLKGIDMDYNHIPDAAMTIATTALFAEGTTSIRNVYNWRVKETDRLSAMATELRKVGAEVEEGEDYIIVKPVPQLTHAAIDTYDDHRMAMCFSLVALSDKPVTINDPKCTSKTFPDYFDKLKALSC.

Residues K22, S23, and R27 each contribute to the 3-phosphoshikimate site. K22 contributes to the phosphoenolpyruvate binding site. G96 and R124 together coordinate phosphoenolpyruvate. Positions 170, 171, 172, 198, 314, 337, and 341 each coordinate 3-phosphoshikimate. Q172 lines the phosphoenolpyruvate pocket. Residue D314 is the Proton acceptor of the active site. Phosphoenolpyruvate contacts are provided by R345, R387, and K412.

The protein belongs to the EPSP synthase family. In terms of assembly, monomer.

It is found in the cytoplasm. It catalyses the reaction 3-phosphoshikimate + phosphoenolpyruvate = 5-O-(1-carboxyvinyl)-3-phosphoshikimate + phosphate. Its pathway is metabolic intermediate biosynthesis; chorismate biosynthesis; chorismate from D-erythrose 4-phosphate and phosphoenolpyruvate: step 6/7. Its function is as follows. Catalyzes the transfer of the enolpyruvyl moiety of phosphoenolpyruvate (PEP) to the 5-hydroxyl of shikimate-3-phosphate (S3P) to produce enolpyruvyl shikimate-3-phosphate and inorganic phosphate. The polypeptide is 3-phosphoshikimate 1-carboxyvinyltransferase (Vibrio campbellii (strain ATCC BAA-1116)).